Consider the following 112-residue polypeptide: MAESVASSESLPQMKPEEPESKKSPSREAIPKDMPVVNVRDIMMYVENMEGMENKKLIPYVVYLDEQFKEIVQKRRKDARVVFIFMIAIMSMLVIGLVVCGVKLLGYLMEQK.

Over residues 1–11 (MAESVASSESL) the composition is skewed to polar residues. A disordered region spans residues 1–32 (MAESVASSESLPQMKPEEPESKKSPSREAIPK). A compositionally biased stretch (basic and acidic residues) spans 15 to 31 (KPEEPESKKSPSREAIP). A helical transmembrane segment spans residues 81–101 (VVFIFMIAIMSMLVIGLVVCG).

The protein localises to the membrane. This is an uncharacterized protein from Encephalitozoon cuniculi (strain GB-M1) (Microsporidian parasite).